The chain runs to 351 residues: Fe(3+) ions import ATP-binding protein FbpC (351 aa).

The ABC transporter domain occupies V7 to M237. Position 39–46 (G39–T46) interacts with ATP.

This sequence belongs to the ABC transporter superfamily. Fe(3+) ion importer (TC 3.A.1.10) family. The complex is composed of two ATP-binding proteins (FbpC), two transmembrane proteins (FbpB) and a solute-binding protein (FbpA).

It localises to the cell inner membrane. It carries out the reaction Fe(3+)(out) + ATP + H2O = Fe(3+)(in) + ADP + phosphate + H(+). In terms of biological role, part of the ABC transporter complex FbpABC involved in Fe(3+) ions import. Responsible for energy coupling to the transport system. The protein is Fe(3+) ions import ATP-binding protein FbpC of Photobacterium profundum (strain SS9).